Consider the following 241-residue polypeptide: 3-deoxy-D-manno-octulosonic acid kinase (241 aa).

The active site involves D171.

It belongs to the protein kinase superfamily. KdkA/RfaP family.

It is found in the cell inner membrane. The enzyme catalyses an alpha-Kdo-(2-&gt;6)-lipid IVA + ATP = a 4-O-phospho-alpha-Kdo-(2-&gt;6)-lipid IVA + ADP + H(+). The protein operates within bacterial outer membrane biogenesis; LPS core biosynthesis. Catalyzes the ATP-dependent phosphorylation of the 3-deoxy-D-manno-octulosonic acid (Kdo) residue in Kdo-lipid IV(A) at the 4-OH position. The chain is 3-deoxy-D-manno-octulosonic acid kinase from Haemophilus influenzae (strain PittEE).